Consider the following 231-residue polypeptide: Probable pyridoxamine 5'-phosphate oxidase (231 aa).

Residue 20–23 (QYEK) participates in pyridoxal 5'-phosphate binding. An FMN-binding site is contributed by 74-77 (RLVL). K79 contributes to the pyridoxal 5'-phosphate binding site. FMN contacts are provided by residues 89–90 (FT), 96–97 (KK), and Q119. Pyridoxal 5'-phosphate contacts are provided by Y137, R141, and S145. Residues 154–155 (QS) and W202 each bind FMN. Residue 208–210 (RLH) coordinates pyridoxal 5'-phosphate. Residue R212 coordinates FMN.

The protein belongs to the pyridoxamine 5'-phosphate oxidase family. Homodimer. FMN is required as a cofactor.

The enzyme catalyses pyridoxamine 5'-phosphate + O2 + H2O = pyridoxal 5'-phosphate + H2O2 + NH4(+). It carries out the reaction pyridoxine 5'-phosphate + O2 = pyridoxal 5'-phosphate + H2O2. Its pathway is cofactor metabolism; pyridoxal 5'-phosphate salvage; pyridoxal 5'-phosphate from pyridoxamine 5'-phosphate: step 1/1. It functions in the pathway cofactor metabolism; pyridoxal 5'-phosphate salvage; pyridoxal 5'-phosphate from pyridoxine 5'-phosphate: step 1/1. Catalyzes the oxidation of either pyridoxine 5'-phosphate (PNP) or pyridoxamine 5'-phosphate (PMP) into pyridoxal 5'-phosphate (PLP). This Schizosaccharomyces pombe (strain 972 / ATCC 24843) (Fission yeast) protein is Probable pyridoxamine 5'-phosphate oxidase.